Consider the following 241-residue polypeptide: MORN repeat-containing protein 3 (241 aa).

The interval 6-35 is interaction with MDM2; that stretch reads CPQKSEPLWKEWDQKAQKNGLRHQVFAVNG. MORN repeat units lie at residues 38–60, 62–84, 91–113, 114–136, 137–159, 160–182, and 184–205; these read YVGEWKDNVKHGKGTQVWKKNGA, YEGDWKSGKRDGYGTLSLPDQET, YSGWWKGDKKCGYGIQFFGPKEY, YEGDWCGNQRSGWGRMYYSNGDI, YEGQWRNDKPEGEGMLRLKNGNR, YEGNWQRGVKNGSGRFFHLDHGQ, and FEGFWVDDVAKCGTMIDFGRDE. An interaction with SIRT1 region spans residues 76 to 100; sequence TLSLPDQETGKYKRAYSGWWKGDKK. The interaction with TP53 stretch occupies residues 206-240; it reads APQPTQFPIPEVKILDPDGVLEEALAMFKKTKEEG.

As to quaternary structure, interacts with MEIG1. Interacts with TP53, MDM2 and SIRT1; the interactions mediate post-transcriptional modifications of TP53 by MDM2 and SIRT1.

The protein resides in the cytoplasmic vesicle. It localises to the secretory vesicle. Its subcellular location is the acrosome. Assembles a suppression complex (suppresome) by tethering SIRT1 and MDM2 to regulate composite modifications of p53/TP53. Confers both deacetylation-mediated functional inactivation, by SIRT1, and ubiquitination-dependent degradation, by MDM2, of p53/TP53, promoting a proliferative and cell survival behaviors. May play a role in the regulation of spermatogenesis. The sequence is that of MORN repeat-containing protein 3 (MORN3) from Bos taurus (Bovine).